Reading from the N-terminus, the 84-residue chain is Small ribosomal subunit protein uS17 (84 aa).

This sequence belongs to the universal ribosomal protein uS17 family. Part of the 30S ribosomal subunit.

Functionally, one of the primary rRNA binding proteins, it binds specifically to the 5'-end of 16S ribosomal RNA. In Nitrosomonas europaea (strain ATCC 19718 / CIP 103999 / KCTC 2705 / NBRC 14298), this protein is Small ribosomal subunit protein uS17.